Reading from the N-terminus, the 635-residue chain is Threonine--tRNA ligase (635 aa).

The TGS domain occupies 1–58; sequence MIHVTCNQEAFELPEGASAMDLANKMKQSHCFAGALINDQEKDLSTTLQDGDTVLFLT. The catalytic stretch occupies residues 237–528; that stretch reads DHRVLGTKLD…LIEHFKGRFP (292 aa). 3 residues coordinate Zn(2+): Cys-328, His-379, and His-505.

Belongs to the class-II aminoacyl-tRNA synthetase family. As to quaternary structure, homodimer. It depends on Zn(2+) as a cofactor.

The protein localises to the cytoplasm. It catalyses the reaction tRNA(Thr) + L-threonine + ATP = L-threonyl-tRNA(Thr) + AMP + diphosphate + H(+). Functionally, catalyzes the attachment of threonine to tRNA(Thr) in a two-step reaction: L-threonine is first activated by ATP to form Thr-AMP and then transferred to the acceptor end of tRNA(Thr). Also edits incorrectly charged L-seryl-tRNA(Thr). This is Threonine--tRNA ligase from Chlamydia trachomatis serovar A (strain ATCC VR-571B / DSM 19440 / HAR-13).